Reading from the N-terminus, the 697-residue chain is DNA ligase (697 aa).

NAD(+) contacts are provided by residues 44–48 (DGEFD), 93–94 (SL), and glutamate 123. The active-site N6-AMP-lysine intermediate is lysine 125. NAD(+) contacts are provided by arginine 146, glutamate 186, lysine 302, and lysine 326. Cysteine 420, cysteine 423, cysteine 439, and cysteine 445 together coordinate Zn(2+). The 89-residue stretch at 609–697 (SIPRNLEGLS…GPDAVTDSGV (89 aa)) folds into the BRCT domain.

It belongs to the NAD-dependent DNA ligase family. LigA subfamily. The cofactor is Mg(2+). Requires Mn(2+) as cofactor.

The catalysed reaction is NAD(+) + (deoxyribonucleotide)n-3'-hydroxyl + 5'-phospho-(deoxyribonucleotide)m = (deoxyribonucleotide)n+m + AMP + beta-nicotinamide D-nucleotide.. Functionally, DNA ligase that catalyzes the formation of phosphodiester linkages between 5'-phosphoryl and 3'-hydroxyl groups in double-stranded DNA using NAD as a coenzyme and as the energy source for the reaction. It is essential for DNA replication and repair of damaged DNA. This chain is DNA ligase, found in Rhodococcus opacus (strain B4).